An 814-amino-acid chain; its full sequence is Valine--tRNA ligase (814 aa).

The 'HIGH' region signature appears at 46 to 56 (PTVSGQLHIGH). The 'KMSKS' region signature appears at 536–540 (KMSKS). Lys539 lines the ATP pocket.

It belongs to the class-I aminoacyl-tRNA synthetase family. ValS type 2 subfamily. As to quaternary structure, monomer.

It localises to the cytoplasm. It carries out the reaction tRNA(Val) + L-valine + ATP = L-valyl-tRNA(Val) + AMP + diphosphate. Functionally, catalyzes the attachment of valine to tRNA(Val). As ValRS can inadvertently accommodate and process structurally similar amino acids such as threonine, to avoid such errors, it has a 'posttransfer' editing activity that hydrolyzes mischarged Thr-tRNA(Val) in a tRNA-dependent manner. The polypeptide is Valine--tRNA ligase (Rickettsia typhi (strain ATCC VR-144 / Wilmington)).